A 546-amino-acid polypeptide reads, in one-letter code: Glucose-6-phosphate isomerase (546 aa).

Residue E355 is the Proton donor of the active site. Catalysis depends on residues H386 and K510.

This sequence belongs to the GPI family.

The protein resides in the cytoplasm. It catalyses the reaction alpha-D-glucose 6-phosphate = beta-D-fructose 6-phosphate. Its pathway is carbohydrate biosynthesis; gluconeogenesis. It functions in the pathway carbohydrate degradation; glycolysis; D-glyceraldehyde 3-phosphate and glycerone phosphate from D-glucose: step 2/4. Catalyzes the reversible isomerization of glucose-6-phosphate to fructose-6-phosphate. The protein is Glucose-6-phosphate isomerase of Buchnera aphidicola subsp. Cinara cedri (strain Cc).